The following is a 1178-amino-acid chain: DNA-directed RNA polymerase subunit beta' (1178 aa).

Residues cysteine 60, cysteine 62, cysteine 75, and cysteine 78 each contribute to the Zn(2+) site. Residues aspartate 450, aspartate 452, and aspartate 454 each contribute to the Mg(2+) site. Zn(2+) is bound by residues cysteine 795, cysteine 869, cysteine 876, and cysteine 879.

It belongs to the RNA polymerase beta' chain family. In terms of assembly, the RNAP catalytic core consists of 2 alpha, 1 beta, 1 beta' and 1 omega subunit. When a sigma factor is associated with the core the holoenzyme is formed, which can initiate transcription. Requires Mg(2+) as cofactor. It depends on Zn(2+) as a cofactor.

The catalysed reaction is RNA(n) + a ribonucleoside 5'-triphosphate = RNA(n+1) + diphosphate. DNA-dependent RNA polymerase catalyzes the transcription of DNA into RNA using the four ribonucleoside triphosphates as substrates. The protein is DNA-directed RNA polymerase subunit beta' of Clostridium botulinum (strain Loch Maree / Type A3).